The following is a 188-amino-acid chain: dCTP deaminase (188 aa).

DCTP is bound by residues 111 to 116 (KSTYAR), 135 to 137 (TLE), glutamine 156, tyrosine 170, and glutamine 180. The Proton donor/acceptor role is filled by glutamate 137.

The protein belongs to the dCTP deaminase family. Homotrimer.

The catalysed reaction is dCTP + H2O + H(+) = dUTP + NH4(+). The protein operates within pyrimidine metabolism; dUMP biosynthesis; dUMP from dCTP (dUTP route): step 1/2. Functionally, catalyzes the deamination of dCTP to dUTP. The polypeptide is dCTP deaminase (Neisseria gonorrhoeae (strain ATCC 700825 / FA 1090)).